We begin with the raw amino-acid sequence, 102 residues long: ATP synthase subunit c (102 aa).

Helical transmembrane passes span 34–54 (IGAG…GYIF) and 80–100 (AVSE…IFVA).

This sequence belongs to the ATPase C chain family. In terms of assembly, F-type ATPases have 2 components, F(1) - the catalytic core - and F(0) - the membrane proton channel. F(1) has five subunits: alpha(3), beta(3), gamma(1), delta(1), epsilon(1). F(0) has three main subunits: a(1), b(2) and c(10-14). The alpha and beta chains form an alternating ring which encloses part of the gamma chain. F(1) is attached to F(0) by a central stalk formed by the gamma and epsilon chains, while a peripheral stalk is formed by the delta and b chains.

The protein localises to the cell membrane. Its function is as follows. F(1)F(0) ATP synthase produces ATP from ADP in the presence of a proton or sodium gradient. F-type ATPases consist of two structural domains, F(1) containing the extramembraneous catalytic core and F(0) containing the membrane proton channel, linked together by a central stalk and a peripheral stalk. During catalysis, ATP synthesis in the catalytic domain of F(1) is coupled via a rotary mechanism of the central stalk subunits to proton translocation. Functionally, key component of the F(0) channel; it plays a direct role in translocation across the membrane. A homomeric c-ring of between 10-14 subunits forms the central stalk rotor element with the F(1) delta and epsilon subunits. In Mycoplasma genitalium (strain ATCC 33530 / DSM 19775 / NCTC 10195 / G37) (Mycoplasmoides genitalium), this protein is ATP synthase subunit c.